A 133-amino-acid polypeptide reads, in one-letter code: Ubiquitin-like FUBI-ribosomal protein eS30 fusion protein (133 aa).

The 74-residue stretch at 1 to 74 folds into the Ubiquitin-like domain; that stretch reads MQLFVRAQEL…LEVAGRMLGG (74 aa). The interval 84 to 110 is disordered; sequence GKVRGQTPKVAKQEKKKKKTGRAKRRM. The span at 97 to 110 shows a compositional bias: basic residues; it reads EKKKKKTGRAKRRM. The residue at position 125 (Lys-125) is an N6-succinyllysine.

It in the N-terminal section; belongs to the ubiquitin family. The protein in the C-terminal section; belongs to the eukaryotic ribosomal protein eS30 family. Component of the 40S subunit of the ribosome. Post-translationally, FUBI is cleaved from ribosomal protein S30 by the deubiquitinase USP36 before the assembly of ribosomal protein S30 into pre-40S ribosomal particles. FUBI removal from ribosomal protein S30 is a crucial event for the final maturation of pre-40S particles.

It localises to the cytoplasm. It is found in the nucleus. In terms of biological role, may have pro-apoptotic activity. Component of the 40S subunit of the ribosome. Contributes to the assembly and function of 40S ribosomal subunits. This Homo sapiens (Human) protein is Ubiquitin-like FUBI-ribosomal protein eS30 fusion protein.